The following is a 271-amino-acid chain: MDREEIKVAVLRMEGTNCEDETVKAFRSLGVEAEAVHIKQFYSDMIRFEEQRSVFDYQCLVFPGGFSAGDYIRAGAIFSARVKSVLRKDIEEFIKMGYPILGICNGFQVLVELGALPGFDEDKPLAEKPEMALAMNDSSRFECRPTLLKKESEKCIFVKNLKKDVVMFPVAHAEGKVVFPSGKEDEYLERLTSNDQIVFRYVDEKGDYAGYPWNPNGSFYNIAGICNATHTVFGLMPHPERAFFGYQVGRREGYGDGYCIFRSVVDYLEKL.

Positions 7 to 253 (KVAVLRMEGT…FGYQVGRREG (247 aa)) constitute a Glutamine amidotransferase type-1 domain. The active-site Nucleophile is the C104. Residues H238 and E240 contribute to the active site.

Part of the FGAM synthase complex composed of 1 PurL, 1 PurQ and 2 PurS subunits.

The protein resides in the cytoplasm. The enzyme catalyses N(2)-formyl-N(1)-(5-phospho-beta-D-ribosyl)glycinamide + L-glutamine + ATP + H2O = 2-formamido-N(1)-(5-O-phospho-beta-D-ribosyl)acetamidine + L-glutamate + ADP + phosphate + H(+). It catalyses the reaction L-glutamine + H2O = L-glutamate + NH4(+). It participates in purine metabolism; IMP biosynthesis via de novo pathway; 5-amino-1-(5-phospho-D-ribosyl)imidazole from N(2)-formyl-N(1)-(5-phospho-D-ribosyl)glycinamide: step 1/2. In terms of biological role, part of the phosphoribosylformylglycinamidine synthase complex involved in the purines biosynthetic pathway. Catalyzes the ATP-dependent conversion of formylglycinamide ribonucleotide (FGAR) and glutamine to yield formylglycinamidine ribonucleotide (FGAM) and glutamate. The FGAM synthase complex is composed of three subunits. PurQ produces an ammonia molecule by converting glutamine to glutamate. PurL transfers the ammonia molecule to FGAR to form FGAM in an ATP-dependent manner. PurS interacts with PurQ and PurL and is thought to assist in the transfer of the ammonia molecule from PurQ to PurL. This Archaeoglobus fulgidus (strain ATCC 49558 / DSM 4304 / JCM 9628 / NBRC 100126 / VC-16) protein is Phosphoribosylformylglycinamidine synthase subunit PurQ.